The primary structure comprises 170 residues: Ribosome maturation factor RimM (170 aa).

One can recognise a PRC barrel domain in the interval His-97 to Phe-170.

This sequence belongs to the RimM family. Binds ribosomal protein uS19.

Its subcellular location is the cytoplasm. In terms of biological role, an accessory protein needed during the final step in the assembly of 30S ribosomal subunit, possibly for assembly of the head region. Essential for efficient processing of 16S rRNA. May be needed both before and after RbfA during the maturation of 16S rRNA. It has affinity for free ribosomal 30S subunits but not for 70S ribosomes. The polypeptide is Ribosome maturation factor RimM (Xylella fastidiosa (strain M12)).